The primary structure comprises 300 residues: ClpXP adapter protein SpxH (300 aa).

Belongs to the SpxH family. Interacts with Spx.

It localises to the cytoplasm. Its function is as follows. Adapter protein required for efficient degradation of Spx by ClpXP under non-stress conditions. Interaction with Spx stabilizes Spx and exposes the C-terminus of Spx for recognition and proteolysis by ClpXP. This Shouchella clausii (strain KSM-K16) (Alkalihalobacillus clausii) protein is ClpXP adapter protein SpxH.